The chain runs to 288 residues: Proteasome assembly chaperone 1 (288 aa).

At alanine 2 the chain carries N-acetylalanine. Positions 12-38 (TPCRAGTEEEEEEEDGNRETPEDREVR) are disordered. Position 18 is a phosphothreonine (threonine 18). Residues 28 to 38 (NRETPEDREVR) are compositionally biased toward basic and acidic residues. A Phosphothreonine modification is found at threonine 54. A Phosphoserine modification is found at serine 180. Lysine 264 bears the N6-acetyllysine mark.

The protein belongs to the PSMG1 family. In terms of assembly, forms a heterodimer with PSMG2. The PSMG1-PSMG2 heterodimer interacts directly with the PSMA5 and PSMA7 proteasome alpha subunits. Post-translationally, degraded by the proteasome upon completion of 20S proteasome maturation.

It localises to the cytoplasm. The protein resides in the endoplasmic reticulum. Its function is as follows. Chaperone protein which promotes assembly of the 20S proteasome as part of a heterodimer with PSMG2. The PSMG1-PSMG2 heterodimer binds to the PSMA5 and PSMA7 proteasome subunits, promotes assembly of the proteasome alpha subunits into the heteroheptameric alpha ring and prevents alpha ring dimerization. In Bos taurus (Bovine), this protein is Proteasome assembly chaperone 1.